The chain runs to 562 residues: O-fucosyltransferase 4 (562 aa).

The tract at residues Ser-10 to Gln-46 is disordered. Residues Lys-37–Gln-46 are compositionally biased toward low complexity. A helical; Signal-anchor for type II membrane protein membrane pass occupies residues Gly-67–Ala-87. 4 N-linked (GlcNAc...) asparagine glycosylation sites follow: Asn-122, Asn-146, Asn-185, and Asn-239. Substrate is bound at residue His-332 to Arg-334. N-linked (GlcNAc...) asparagine glycans are attached at residues Asn-404, Asn-420, Asn-450, and Asn-555.

This sequence belongs to the glycosyltransferase GT106 family.

The protein resides in the membrane. Its pathway is glycan metabolism. The sequence is that of O-fucosyltransferase 4 from Arabidopsis thaliana (Mouse-ear cress).